The chain runs to 147 residues: MASDHRRFVLSGAVLLSVLAVAAATLESVKDECQLGVDFPHNPLATCHTYVIKRVCGRGPSRPMLVKERCCRELAAVPDHCRCEALRILMDGVRTPEGRVVEGRLGDRRDCPREEQRAFAATLVTAAECNLSSVQAPGVRLVLLADG.

Residues methionine 1 to valine 21 form the signal peptide.

It belongs to the protease inhibitor I6 (cereal trypsin/alpha-amylase inhibitor) family. In terms of processing, five disulfide bonds, which are essential for the inhibitor activity, are probably present. Endosperm.

The protein resides in the secreted. Its function is as follows. Alpha-amylase/trypsin inhibitor. In Hordeum vulgare (Barley), this protein is Alpha-amylase/trypsin inhibitor.